The primary structure comprises 245 residues: Demethylmenaquinone methyltransferase (245 aa).

S-adenosyl-L-methionine-binding positions include T58, D79, and N106–A107.

Belongs to the class I-like SAM-binding methyltransferase superfamily. MenG/UbiE family.

The catalysed reaction is a 2-demethylmenaquinol + S-adenosyl-L-methionine = a menaquinol + S-adenosyl-L-homocysteine + H(+). It functions in the pathway quinol/quinone metabolism; menaquinone biosynthesis; menaquinol from 1,4-dihydroxy-2-naphthoate: step 2/2. In terms of biological role, methyltransferase required for the conversion of demethylmenaquinol (DMKH2) to menaquinol (MKH2). The polypeptide is Demethylmenaquinone methyltransferase (Halalkalibacterium halodurans (strain ATCC BAA-125 / DSM 18197 / FERM 7344 / JCM 9153 / C-125) (Bacillus halodurans)).